We begin with the raw amino-acid sequence, 114 residues long: ATP-dependent Clp protease adapter protein ClpS (114 aa).

Belongs to the ClpS family. As to quaternary structure, binds to the N-terminal domain of the chaperone ClpA.

Involved in the modulation of the specificity of the ClpAP-mediated ATP-dependent protein degradation. The sequence is that of ATP-dependent Clp protease adapter protein ClpS from Bdellovibrio bacteriovorus (strain ATCC 15356 / DSM 50701 / NCIMB 9529 / HD100).